Here is a 381-residue protein sequence, read N- to C-terminus: uncharacterized protein (381 aa).

Residues 3 to 23 (GAVAGLVFLAVLVIFAIIVVA) form a helical membrane-spanning segment.

The protein belongs to the band 7/mec-2 family.

The protein localises to the membrane. This is an uncharacterized protein from Mycobacterium bovis (strain ATCC BAA-935 / AF2122/97).